Reading from the N-terminus, the 1121-residue chain is Cilia- and flagella-associated protein 70 (1121 aa).

A compositionally biased stretch (basic and acidic residues) spans asparagine 410–proline 428. The interval asparagine 410 to glycine 457 is disordered. 3 TPR repeats span residues serine 635 to asparagine 668, leucine 669 to histidine 702, and histidine 704 to asparagine 736. Disordered stretches follow at residues lysine 778–isoleucine 802 and glutamine 836–serine 858. TPR repeat units lie at residues cysteine 929–asparagine 962, proline 963–alanine 996, histidine 1000–cysteine 1033, threonine 1035–asparagine 1066, and glutamate 1068–aspartate 1100.

It belongs to the CFAP70 family. As to expression, expressed in testis.

The protein resides in the cell projection. Its subcellular location is the cilium. It is found in the flagellum. It localises to the cytoplasm. The protein localises to the cytoskeleton. The protein resides in the flagellum basal body. Its subcellular location is the cilium axoneme. Functionally, axoneme-binding protein that plays a role in the regulation of ciliary motility and cilium length. In Homo sapiens (Human), this protein is Cilia- and flagella-associated protein 70.